Reading from the N-terminus, the 487-residue chain is NADH-quinone oxidoreductase subunit N (487 aa).

Helical transmembrane passes span 7–27 (ILGP…LLMV), 38–58 (LVGL…GLGA), 79–99 (YAKA…MVWL), 111–131 (ILVL…DLIA), 164–184 (FVLG…VYGF), 207–227 (LLIG…AVPF), 238–258 (APTP…LTLF), 276–296 (VIIL…IVQT), 301–321 (LMAY…AAGT), 328–348 (VLVY…VILA), 373–393 (AAAM…AGFF), 406–426 (GLFA…FYYL), and 451–471 (VILI…SVVV).

It belongs to the complex I subunit 2 family. As to quaternary structure, NDH-1 is composed of 14 different subunits. Subunits NuoA, H, J, K, L, M, N constitute the membrane sector of the complex.

Its subcellular location is the cell inner membrane. The enzyme catalyses a quinone + NADH + 5 H(+)(in) = a quinol + NAD(+) + 4 H(+)(out). Its function is as follows. NDH-1 shuttles electrons from NADH, via FMN and iron-sulfur (Fe-S) centers, to quinones in the respiratory chain. The immediate electron acceptor for the enzyme in this species is believed to be ubiquinone. Couples the redox reaction to proton translocation (for every two electrons transferred, four hydrogen ions are translocated across the cytoplasmic membrane), and thus conserves the redox energy in a proton gradient. This Rhodospirillum rubrum (strain ATCC 11170 / ATH 1.1.1 / DSM 467 / LMG 4362 / NCIMB 8255 / S1) protein is NADH-quinone oxidoreductase subunit N.